Reading from the N-terminus, the 238-residue chain is MRPNERANNQPRPIKITRHYTKHAEGSVLVEFGDTKVLCTATVEESVPRFLKGQNQGWVTAEYGMLPRSTHSRMQREAAKGKQGGRTLEIQRLIARSLRAMVDLEALGERSITLDCDVIQADGGTRTASITGACVALCDAIHGLVENGTLKVNPIKSLVAAISVGIVEGVPVCDLEYVEDSAAETDMNVVMMEDGRMIEVQGTAEGEPFSHEELLTLLALAKEGCQLIFDVQRQALAK.

Phosphate contacts are provided by residues R86 and 124 to 126 (GTR).

This sequence belongs to the RNase PH family. Homohexameric ring arranged as a trimer of dimers.

It catalyses the reaction tRNA(n+1) + phosphate = tRNA(n) + a ribonucleoside 5'-diphosphate. Functionally, phosphorolytic 3'-5' exoribonuclease that plays an important role in tRNA 3'-end maturation. Removes nucleotide residues following the 3'-CCA terminus of tRNAs; can also add nucleotides to the ends of RNA molecules by using nucleoside diphosphates as substrates, but this may not be physiologically important. Probably plays a role in initiation of 16S rRNA degradation (leading to ribosome degradation) during starvation. The sequence is that of Ribonuclease PH from Pasteurella multocida (strain Pm70).